Here is a 169-residue protein sequence, read N- to C-terminus: Ribosome maturation factor RimP (169 aa).

It belongs to the RimP family.

It is found in the cytoplasm. In terms of biological role, required for maturation of 30S ribosomal subunits. In Coprothermobacter proteolyticus (strain ATCC 35245 / DSM 5265 / OCM 4 / BT), this protein is Ribosome maturation factor RimP.